The chain runs to 95 residues: MKTLLLTLVVVTIVCLDLGYTIVCHTTATSPISAVTCPPGENLCYRKMWCDVFCSSRGKVVELGCAATCPSKKPYEEVTCCSTDKCNPHPKQRPG.

Positions 1–21 (MKTLLLTLVVVTIVCLDLGYT) are cleaved as a signal peptide. 5 cysteine pairs are disulfide-bonded: cysteine 24-cysteine 44, cysteine 37-cysteine 65, cysteine 50-cysteine 54, cysteine 69-cysteine 80, and cysteine 81-cysteine 86.

It belongs to the three-finger toxin family. Long-chain subfamily. Type II alpha-neurotoxin sub-subfamily. In terms of assembly, monomer in solution, homodimer in crystal state. As to expression, expressed by the venom gland.

It is found in the secreted. Functionally, binds with high affinity to muscular (alpha-1/CHRNA1) and neuronal (alpha-7/CHRNA7) nicotinic acetylcholine receptor (nAChR) and inhibits acetylcholine from binding to the receptor, thereby impairing neuromuscular and neuronal transmission. The sequence is that of Alpha-bungarotoxin isoform V31 from Bungarus multicinctus (Many-banded krait).